The sequence spans 240 residues: Aldehyde dehydrogenase, cytosolic 2 (240 aa).

Residues Glu8 and Cys42 contribute to the active site. N6-acetyllysine is present on residues Lys106, Lys149, Lys151, and Lys174.

This sequence belongs to the aldehyde dehydrogenase family. Homotetramer. In terms of tissue distribution, non-lens specific, predominant form expressed in the liver.

The protein resides in the cytoplasm. The enzyme catalyses an aldehyde + NAD(+) + H2O = a carboxylate + NADH + 2 H(+). It participates in alcohol metabolism; ethanol degradation; acetate from ethanol: step 2/2. Elephant shrews, in contrast to other mammals, possess both a lens- and a non-lens specific class-1 aldehyde dehydrogenase. Can convert/oxidize retinaldehyde to retinoic acid. The polypeptide is Aldehyde dehydrogenase, cytosolic 2 (Macroscelides proboscideus (Short-eared elephant shrew)).